Reading from the N-terminus, the 323-residue chain is MKSSKTGILLANLGTPDTPSPKAISRYLKEFLSDPRVVDLPRWKWLPLLNGIILPIRSRRIAKNYGAIWTEQGSPLFAITQKQKALLTEFFQQRQQNVIIEIGMTYGNPSMQYAIDNLIEQKVDKIIVLPLYPQYSSTTTAPVFDVFAQALKRHRHIVPFEFIHSYHLDENYIEALVKSIKVRLKNDEFLLFSFHGIPKRYEQEGDFYRPQCEQTAQAVVQKLGLKKEQWRLCFQSRFGSEPWLQPYTDKFLETAAQQGITKLAVICPGFSADCLETLEEIKEENKRIFLAYGGESYHYIPALNDSPEHIACLGNLLLKRMTI.

Fe cation-binding residues include histidine 195 and glutamate 276.

This sequence belongs to the ferrochelatase family.

It localises to the cytoplasm. The enzyme catalyses heme b + 2 H(+) = protoporphyrin IX + Fe(2+). It functions in the pathway porphyrin-containing compound metabolism; protoheme biosynthesis; protoheme from protoporphyrin-IX: step 1/1. Its function is as follows. Catalyzes the ferrous insertion into protoporphyrin IX. This is Ferrochelatase from Mannheimia succiniciproducens (strain KCTC 0769BP / MBEL55E).